A 197-amino-acid chain; its full sequence is Phospholipid hydroperoxide glutathione peroxidase (197 aa).

Ser40 is modified (phosphoserine). Residue Sec73 is part of the active site. Position 73 (Sec73) is a non-standard amino acid, selenocysteine.

The protein belongs to the glutathione peroxidase family. As to quaternary structure, monomer. Has a tendency to form higher mass oligomers. Interacts with FUNDC1; this interaction promotes GPX4 recruitment into mitochondria through TOM/TIM complex where it is degraded by mitophagy.

The protein localises to the mitochondrion. Its subcellular location is the cytoplasm. It carries out the reaction a hydroperoxy polyunsaturated fatty acid + 2 glutathione = a hydroxy polyunsaturated fatty acid + glutathione disulfide + H2O. It catalyses the reaction (12S)-hydroperoxy-(5Z,8Z,10E,14Z)-eicosatetraenoate + 2 glutathione = (12S)-hydroxy-(5Z,8Z,10E,14Z)-eicosatetraenoate + glutathione disulfide + H2O. The catalysed reaction is (13S)-hydroperoxy-(9Z,11E)-octadecadienoate + 2 glutathione = (13S)-hydroxy-(9Z,11E)-octadecadienoate + glutathione disulfide + H2O. Functionally, essential antioxidant peroxidase that directly reduces phospholipid hydroperoxide even if they are incorporated in membranes and lipoproteins. Can also reduce fatty acid hydroperoxide, cholesterol hydroperoxide and thymine hydroperoxide. Plays a key role in protecting cells from oxidative damage by preventing membrane lipid peroxidation. Required to prevent cells from ferroptosis, a non-apoptotic cell death resulting from an iron-dependent accumulation of lipid reactive oxygen species. The presence of selenocysteine (Sec) versus Cys at the active site is essential for life: it provides resistance to overoxidation and prevents cells against ferroptosis. The presence of Sec at the active site is also essential for the survival of a specific type of parvalbumin-positive interneurons, thereby preventing against fatal epileptic seizures. May be required to protect cells from the toxicity of ingested lipid hydroperoxides. Required for normal sperm development and male fertility. Essential for maturation and survival of photoreceptor cells. Plays a role in a primary T-cell response to viral and parasitic infection by protecting T-cells from ferroptosis and by supporting T-cell expansion. Plays a role of glutathione peroxidase in platelets in the arachidonic acid metabolism. Reduces hydroperoxy ester lipids formed by a 15-lipoxygenase that may play a role as down-regulator of the cellular 15-lipoxygenase pathway. This chain is Phospholipid hydroperoxide glutathione peroxidase, found in Sapajus apella (Brown-capped capuchin).